A 267-amino-acid chain; its full sequence is Orotidine 5'-phosphate decarboxylase (267 aa).

Substrate is bound by residues Asp-38, 60-62 (KTH), 92-101 (DRKFADIGNT), Tyr-218, and Arg-236. Lys-94 serves as the catalytic Proton donor.

The protein belongs to the OMP decarboxylase family.

The catalysed reaction is orotidine 5'-phosphate + H(+) = UMP + CO2. It functions in the pathway pyrimidine metabolism; UMP biosynthesis via de novo pathway; UMP from orotate: step 2/2. This chain is Orotidine 5'-phosphate decarboxylase (URA3), found in Debaryomyces hansenii (strain ATCC 36239 / CBS 767 / BCRC 21394 / JCM 1990 / NBRC 0083 / IGC 2968) (Yeast).